Reading from the N-terminus, the 591-residue chain is Ketol-acid reductoisomerase, chloroplastic (591 aa).

The disordered stretch occupies residues 1–20 (MAAATSSIAPSLSCPSPSSS). A chloroplast-targeting transit peptide spans 1-52 (MAAATSSIAPSLSCPSPSSSSKTLWSSKARTLALPNIGFLSSSSKSLRSLTA). N-acetylthreonine is present on Thr-53. The KARI N-terminal Rossmann domain maps to 102–300 (VRGGRDLFKH…ALGSPFTFAT (199 aa)). Residues 123–130 (GVIGWGSQ), 156–161 (RKGSRS), and 195–199 (SDAAQ) contribute to the NADP(+) site. His-220 is an active-site residue. KARI C-terminal knotted domains are found at residues 301 to 449 (TLEQ…RPAG) and 450 to 586 (DLGP…RPEL). Asp-309, Glu-313, Glu-486, and Glu-490 together coordinate Mg(2+). Ser-512 serves as a coordination point for substrate.

It belongs to the ketol-acid reductoisomerase family. As to quaternary structure, homodimer. The cofactor is Mg(2+).

The protein resides in the plastid. It localises to the chloroplast. The catalysed reaction is (2R)-2,3-dihydroxy-3-methylbutanoate + NADP(+) = (2S)-2-acetolactate + NADPH + H(+). It catalyses the reaction (2R,3R)-2,3-dihydroxy-3-methylpentanoate + NADP(+) = (S)-2-ethyl-2-hydroxy-3-oxobutanoate + NADPH + H(+). Its pathway is amino-acid biosynthesis; L-isoleucine biosynthesis; L-isoleucine from 2-oxobutanoate: step 2/4. It participates in amino-acid biosynthesis; L-valine biosynthesis; L-valine from pyruvate: step 2/4. The polypeptide is Ketol-acid reductoisomerase, chloroplastic (Arabidopsis thaliana (Mouse-ear cress)).